Consider the following 305-residue polypeptide: Protein FdhE homolog (305 aa).

Belongs to the FdhE family.

The protein localises to the cytoplasm. Its function is as follows. Necessary for formate dehydrogenase activity. The chain is Protein FdhE homolog from Haemophilus ducreyi (strain 35000HP / ATCC 700724).